A 520-amino-acid polypeptide reads, in one-letter code: 3-phosphoshikimate 1-carboxyvinyltransferase, chloroplastic (520 aa).

The N-terminal 76 residues, 1-76 (MAQISSMAQG…RISASVATAE (76 aa)), are a transit peptide targeting the chloroplast. 3-phosphoshikimate contacts are provided by K99, S100, and R104. K99 contributes to the phosphoenolpyruvate binding site. Phosphoenolpyruvate is bound by residues G177 and R207. Positions 254, 255, 256, 282, 407, and 434 each coordinate 3-phosphoshikimate. Position 256 (Q256) interacts with phosphoenolpyruvate. Residue D407 is the Proton acceptor of the active site. R438, R480, and K505 together coordinate phosphoenolpyruvate.

This sequence belongs to the EPSP synthase family.

It is found in the plastid. The protein localises to the chloroplast. The catalysed reaction is 3-phosphoshikimate + phosphoenolpyruvate = 5-O-(1-carboxyvinyl)-3-phosphoshikimate + phosphate. The protein operates within metabolic intermediate biosynthesis; chorismate biosynthesis; chorismate from D-erythrose 4-phosphate and phosphoenolpyruvate: step 6/7. In terms of biological role, catalyzes the transfer of the enolpyruvyl moiety of phosphoenolpyruvate (PEP) to the 5-hydroxyl of shikimate-3-phosphate (S3P) to produce enolpyruvyl shikimate-3-phosphate and inorganic phosphate. This Solanum lycopersicum (Tomato) protein is 3-phosphoshikimate 1-carboxyvinyltransferase, chloroplastic.